The following is a 323-amino-acid chain: tRNA dimethylallyltransferase (323 aa).

12-19 is a binding site for ATP; that stretch reads GPTASGKT. 14–19 is a binding site for substrate; sequence TASGKT. 2 interaction with substrate tRNA regions span residues 37–40 and 161–165; these read DSAL and QRLVR.

This sequence belongs to the IPP transferase family. As to quaternary structure, monomer. Mg(2+) is required as a cofactor.

The catalysed reaction is adenosine(37) in tRNA + dimethylallyl diphosphate = N(6)-dimethylallyladenosine(37) in tRNA + diphosphate. Catalyzes the transfer of a dimethylallyl group onto the adenine at position 37 in tRNAs that read codons beginning with uridine, leading to the formation of N6-(dimethylallyl)adenosine (i(6)A). This is tRNA dimethylallyltransferase from Azotobacter vinelandii (strain DJ / ATCC BAA-1303).